Reading from the N-terminus, the 346-residue chain is Methionine import ATP-binding protein MetN 1 (346 aa).

The 240-residue stretch at 2–241 (IEFKQVTKTF…PQHPTTEKFV (240 aa)) folds into the ABC transporter domain. An ATP-binding site is contributed by 38-45 (GFSGAGKS).

Belongs to the ABC transporter superfamily. Methionine importer (TC 3.A.1.24) family. In terms of assembly, the complex is composed of two ATP-binding proteins (MetN), two transmembrane proteins (MetI) and a solute-binding protein (MetQ).

It is found in the cell membrane. It carries out the reaction L-methionine(out) + ATP + H2O = L-methionine(in) + ADP + phosphate + H(+). The enzyme catalyses D-methionine(out) + ATP + H2O = D-methionine(in) + ADP + phosphate + H(+). Functionally, part of the ABC transporter complex MetNIQ involved in methionine import. Responsible for energy coupling to the transport system. This chain is Methionine import ATP-binding protein MetN 1, found in Shouchella clausii (strain KSM-K16) (Alkalihalobacillus clausii).